Here is a 307-residue protein sequence, read N- to C-terminus: Methionyl-tRNA formyltransferase (307 aa).

110-113 (SLLP) contacts (6S)-5,6,7,8-tetrahydrofolate.

Belongs to the Fmt family.

The catalysed reaction is L-methionyl-tRNA(fMet) + (6R)-10-formyltetrahydrofolate = N-formyl-L-methionyl-tRNA(fMet) + (6S)-5,6,7,8-tetrahydrofolate + H(+). Attaches a formyl group to the free amino group of methionyl-tRNA(fMet). The formyl group appears to play a dual role in the initiator identity of N-formylmethionyl-tRNA by promoting its recognition by IF2 and preventing the misappropriation of this tRNA by the elongation apparatus. The sequence is that of Methionyl-tRNA formyltransferase from Rhodococcus erythropolis (strain PR4 / NBRC 100887).